The chain runs to 528 residues: Tyrosine--tRNA ligase, cytoplasmic (528 aa).

Met1 carries the post-translational modification N-acetylmethionine. Gly2 is modified (N-acetylglycine; in Tyrosine--tRNA ligase, cytoplasmic, N-terminally processed). Tyr39 serves as a coordination point for L-tyrosine. Tyr39 serves as a coordination point for trans-resveratrol. The short motif at 44 to 52 is the 'HIGH' region element; that stretch reads TTGKPHVAY. L-tyrosine-binding residues include Tyr166, Gln170, Asp173, and Gln188. The trans-resveratrol site is built by Gln170 and Asp173. Lys197 is modified (N6-acetyllysine). At Ser205 the chain carries Phosphoserine. An N6-acetyllysine modification is found at Lys206. The 'KMSKS' region signature appears at 222 to 226; that stretch reads KMSSS. The short motif at 242–247 is the Nuclear localization signal element; sequence KKKLKK. The disordered stretch occupies residues 339-363; that stretch reads AAYPDPSKQKPPAKGPAKNSEPEEV. Residues 364–468 enclose the tRNA-binding domain; it reads IPSRLDIRVG…AGSAPGERVF (105 aa). Phosphoserine is present on Ser386. Residues Lys474, Lys482, and Lys490 each carry the N6-acetyllysine modification.

This sequence belongs to the class-I aminoacyl-tRNA synthetase family. In terms of assembly, homodimer. Interacts (when binding to resveratrol) with PARP1; interaction stimulates the poly-ADP-ribosyltransferase activity of PARP1.

The protein localises to the cytoplasm. It localises to the nucleus. The catalysed reaction is tRNA(Tyr) + L-tyrosine + ATP = L-tyrosyl-tRNA(Tyr) + AMP + diphosphate + H(+). Its activity is regulated as follows. Resveratrol strongly inhibits the tyrosine--tRNA ligase activity. Functionally, tyrosine--tRNA ligase that catalyzes the attachment of tyrosine to tRNA(Tyr) in a two-step reaction: tyrosine is first activated by ATP to form Tyr-AMP and then transferred to the acceptor end of tRNA(Tyr). Also acts as a positive regulator of poly-ADP-ribosylation in the nucleus, independently of its tyrosine--tRNA ligase activity. Activity is switched upon resveratrol-binding: resveratrol strongly inhibits the tyrosine--tRNA ligase activity and promotes relocalization to the nucleus, where YARS1 specifically stimulates the poly-ADP-ribosyltransferase activity of PARP1. The chain is Tyrosine--tRNA ligase, cytoplasmic (Yars1) from Mus musculus (Mouse).